The following is a 498-amino-acid chain: Putative ABC transporter ATP-binding protein MM_2387 (498 aa).

2 ABC transporter domains span residues 2-242 (IELR…TSKS) and 258-490 (ISIK…VEEK). Residues 36 to 43 (GHSAAGKT) and 290 to 297 (GENGSGKT) contribute to the ATP site.

This sequence belongs to the ABC transporter superfamily.

It is found in the cell membrane. Probably part of an ABC transporter complex. Responsible for energy coupling to the transport system. The sequence is that of Putative ABC transporter ATP-binding protein MM_2387 from Methanosarcina mazei (strain ATCC BAA-159 / DSM 3647 / Goe1 / Go1 / JCM 11833 / OCM 88) (Methanosarcina frisia).